A 362-amino-acid polypeptide reads, in one-letter code: Adenosine deaminase (362 aa).

Zn(2+) is bound by residues histidine 19 and histidine 21. The substrate site is built by histidine 21, aspartate 23, and glycine 181. Histidine 208 contacts Zn(2+). The active-site Proton donor is the glutamate 211. Residue aspartate 300 participates in Zn(2+) binding.

Belongs to the metallo-dependent hydrolases superfamily. Adenosine and AMP deaminases family. Adenosine deaminase subfamily. Zn(2+) is required as a cofactor.

It catalyses the reaction adenosine + H2O + H(+) = inosine + NH4(+). It carries out the reaction 2'-deoxyadenosine + H2O + H(+) = 2'-deoxyinosine + NH4(+). In terms of biological role, catalyzes the hydrolytic deamination of adenosine and 2-deoxyadenosine. In Mycolicibacterium gilvum (strain PYR-GCK) (Mycobacterium gilvum (strain PYR-GCK)), this protein is Adenosine deaminase.